A 445-amino-acid polypeptide reads, in one-letter code: Protein trichome berefringence-like 7 (445 aa).

A helical; Signal-anchor for type II membrane protein transmembrane segment spans residues 69–89 (IIAGTIVSFLVIIAGGYLYVV). The GDS motif signature appears at 188 to 190 (GDS). The short motif at 418–432 (DCSHWCLPGVPDIWN) is the DCXHWCLPGXXDXWN motif element.

Belongs to the PC-esterase family. TBL subfamily.

The protein localises to the membrane. May act as a bridging protein that binds pectin and other cell wall polysaccharides. Probably involved in maintaining esterification of pectins. May be involved in the specific O-acetylation of cell wall polymers. This chain is Protein trichome berefringence-like 7 (TBL7), found in Arabidopsis thaliana (Mouse-ear cress).